The following is a 631-amino-acid chain: Peptidyl-prolyl cis-trans isomerase CYP71 (631 aa).

The interval 26–45 (VEEEEPMVGPGPAPRGKRKR) is disordered. WD repeat units lie at residues 68-106 (MHRD…IEFA), 111-150 (SHLG…MMAM), 201-240 (IHMN…FPED), and 257-297 (KCKT…RRVY). Positions 474-628 (LPENVIMHTT…QDVKILNVTV (155 aa)) constitute a PPIase cyclophilin-type domain.

This sequence belongs to the cyclophilin-type PPIase family. Interacts with FAS1 and LHP1. Interacts (via WD repeat domain) with histone H3. In terms of tissue distribution, ubiquitous. Expressed in the meristems.

The protein localises to the nucleus. It catalyses the reaction [protein]-peptidylproline (omega=180) = [protein]-peptidylproline (omega=0). PPIases accelerate the folding of proteins. It catalyzes the cis-trans isomerization of proline imidic peptide bonds in oligopeptides. Histone proline isomerase that increases the rate of cis-trans isomerization of the synthetic histone H3 peptides H3P30 (RKSAP30F-p-nitroanilide) and H3P30K27me3 (RKme3-SAP30F-p-nitroanilide) in the histone H3 N-terminal tail, in vitro. Histone remodeling factor involved in chromatin-based gene silencing. Reinforces H3K27 methylation. Involved in fundamental processes of chromatin assembly and histone modification by mediating the targeting of FAS1 and LHP1 on the chromatin. Required for the formation and development of leaves, for normal phyllotaxy and for the formation, maintenance and activity of root and shoot apical meristems. The sequence is that of Peptidyl-prolyl cis-trans isomerase CYP71 from Arabidopsis thaliana (Mouse-ear cress).